A 159-amino-acid polypeptide reads, in one-letter code: Ribosomal RNA large subunit methyltransferase H (159 aa).

Residues Leu-76, Gly-108, and 127-132 (FSKMTF) contribute to the S-adenosyl-L-methionine site.

The protein belongs to the RNA methyltransferase RlmH family. Homodimer.

The protein resides in the cytoplasm. The enzyme catalyses pseudouridine(1915) in 23S rRNA + S-adenosyl-L-methionine = N(3)-methylpseudouridine(1915) in 23S rRNA + S-adenosyl-L-homocysteine + H(+). Specifically methylates the pseudouridine at position 1915 (m3Psi1915) in 23S rRNA. This is Ribosomal RNA large subunit methyltransferase H from Bifidobacterium adolescentis (strain ATCC 15703 / DSM 20083 / NCTC 11814 / E194a).